A 428-amino-acid chain; its full sequence is Keratin, type I cytoskeletal 18-A (428 aa).

The tract at residues Ser-2–Asn-78 is head. A coil 1A region spans residues Glu-79–Thr-114. The IF rod domain maps to Glu-79–Leu-390. Positions Leu-115–Val-131 are linker 1. The coil 1B stretch occupies residues Val-132–Leu-223. A linker 12 region spans residues Arg-224–Ile-247. The tract at residues Met-248 to Gly-385 is coil 2. Residues Glu-386–Lys-428 form a tail region.

Belongs to the intermediate filament family. As to quaternary structure, heterotetramer of two type I and two type II keratins. Keratin-18 associates with keratin-8. In terms of processing, phosphorylated. Post-translationally, proteolytically cleaved by caspases during epithelial cell apoptosis.

In terms of biological role, when phosphorylated, plays a role in filament reorganization. This Polypterus senegalus (Senegal bichir) protein is Keratin, type I cytoskeletal 18-A.